A 127-amino-acid chain; its full sequence is MAQSVPPGDINTQPSQKIVFNAPYDDKHTYHIKITNAGGRRIGWAIKTTNMRRLSVDPPCGVLDPKEKVLMAVSCDTFNAATEDLNNDRITIEWTNTPDGAAKQFRREWFQGDGMVRRKNLPIEYNL.

Ala2 is subject to N-acetylalanine. One can recognise an MSP domain in the interval 9-126 (DINTQPSQKI…RRKNLPIEYN (118 aa)).

Forms filaments 10 nm wide, with a characteristic substructure repeating axially at 9 nm. In terms of tissue distribution, sperm.

The protein resides in the cell projection. It is found in the pseudopodium. It localises to the cytoplasm. The protein localises to the cytoskeleton. Its function is as follows. Central component in molecular interactions underlying sperm crawling. Forms an extensive filament system that extends from sperm villipoda, along the leading edge of the pseudopod. The polypeptide is Major sperm protein isoform alpha (Ascaris suum (Pig roundworm)).